A 278-amino-acid chain; its full sequence is 4-hydroxy-3-methylbut-2-enyl diphosphate reductase (278 aa).

Cysteine 12 is a binding site for [4Fe-4S] cluster. (2E)-4-hydroxy-3-methylbut-2-enyl diphosphate is bound by residues histidine 40 and histidine 75. Dimethylallyl diphosphate is bound by residues histidine 40 and histidine 75. Residues histidine 40 and histidine 75 each contribute to the isopentenyl diphosphate site. Cysteine 97 provides a ligand contact to [4Fe-4S] cluster. Histidine 125 is a binding site for (2E)-4-hydroxy-3-methylbut-2-enyl diphosphate. Dimethylallyl diphosphate is bound at residue histidine 125. Histidine 125 contributes to the isopentenyl diphosphate binding site. Glutamate 127 serves as the catalytic Proton donor. (2E)-4-hydroxy-3-methylbut-2-enyl diphosphate is bound at residue threonine 157. Cysteine 187 lines the [4Fe-4S] cluster pocket. Residues serine 215, serine 216, asparagine 217, and serine 258 each coordinate (2E)-4-hydroxy-3-methylbut-2-enyl diphosphate. Residues serine 215, serine 216, asparagine 217, and serine 258 each coordinate dimethylallyl diphosphate. Serine 215, serine 216, asparagine 217, and serine 258 together coordinate isopentenyl diphosphate.

The protein belongs to the IspH family. [4Fe-4S] cluster serves as cofactor.

The catalysed reaction is isopentenyl diphosphate + 2 oxidized [2Fe-2S]-[ferredoxin] + H2O = (2E)-4-hydroxy-3-methylbut-2-enyl diphosphate + 2 reduced [2Fe-2S]-[ferredoxin] + 2 H(+). The enzyme catalyses dimethylallyl diphosphate + 2 oxidized [2Fe-2S]-[ferredoxin] + H2O = (2E)-4-hydroxy-3-methylbut-2-enyl diphosphate + 2 reduced [2Fe-2S]-[ferredoxin] + 2 H(+). Its pathway is isoprenoid biosynthesis; dimethylallyl diphosphate biosynthesis; dimethylallyl diphosphate from (2E)-4-hydroxy-3-methylbutenyl diphosphate: step 1/1. It participates in isoprenoid biosynthesis; isopentenyl diphosphate biosynthesis via DXP pathway; isopentenyl diphosphate from 1-deoxy-D-xylulose 5-phosphate: step 6/6. Its function is as follows. Catalyzes the conversion of 1-hydroxy-2-methyl-2-(E)-butenyl 4-diphosphate (HMBPP) into a mixture of isopentenyl diphosphate (IPP) and dimethylallyl diphosphate (DMAPP). Acts in the terminal step of the DOXP/MEP pathway for isoprenoid precursor biosynthesis. This chain is 4-hydroxy-3-methylbut-2-enyl diphosphate reductase, found in Pseudothermotoga lettingae (strain ATCC BAA-301 / DSM 14385 / NBRC 107922 / TMO) (Thermotoga lettingae).